We begin with the raw amino-acid sequence, 352 residues long: Mas-related G-protein coupled receptor member X2 (352 aa).

The Extracellular portion of the chain corresponds to 1-45; that stretch reads MEERNISGRDLRVDSNITYWGTNITAVNESNHTGMSFCEVVSCTM. Residues Asn-5, Asn-16, Asn-23, Asn-28, and Asn-31 are each glycosylated (N-linked (GlcNAc...) asparagine). Residues 46 to 66 traverse the membrane as a helical segment; the sequence is VFLSLIVALVGLVGNATVLWF. Topologically, residues 67-75 are cytoplasmic; sequence LGFQMRRNA. The chain crosses the membrane as a helical span at residues 76 to 96; that stretch reads FSVYILNLAGADFLFICFQIG. At 97-107 the chain is on the extracellular side; that stretch reads YCFHMILDIDS. The helical transmembrane segment at 108-128 threads the bilayer; the sequence is IPIEIDLFYLVVLNFPYFCGL. At 129–155 the chain is on the cytoplasmic side; the sequence is SILSAISIERCLSVMWPIWYHCQRPRH. A helical transmembrane segment spans residues 156–176; that stretch reads TSAVICTLLWVLSLVCSLLEG. The Extracellular segment spans residues 177–195; it reads KECGFLYYTSDPGWCKTFD. A helical transmembrane segment spans residues 196-216; it reads LITATWLIVLFVALLGSSLAL. The Cytoplasmic portion of the chain corresponds to 217–239; the sequence is VITIFWGLHKIPVTRLYVAIVFT. Residues 240–260 form a helical membrane-spanning segment; it reads VLVFLLFGLPYGIYWFLLVWI. Topologically, residues 261–275 are extracellular; sequence EKFYYVLPCSIYPVT. The chain crosses the membrane as a helical span at residues 276-296; it reads VFLSCVNSSAKPIIYCLVGSI. The Cytoplasmic segment spans residues 297–347; it reads RHHRFQRKTLKLFLQRAMQDTPEEEECGEMGSSGRSREIKTIWKGLRAALI.

This sequence belongs to the G-protein coupled receptor 1 family. Mas subfamily.

The protein localises to the cell membrane. Orphan receptor. Probably involved in the function of nociceptive neurons. May regulate nociceptor function and/or development, including the sensation or modulation of pain. This is Mas-related G-protein coupled receptor member X2 (Mrgprx2) from Mus musculus (Mouse).